Consider the following 411-residue polypeptide: Alpha-N-acetylgalactosaminidase (411 aa).

An N-terminal signal peptide occupies residues 1–17 (MLLKTVLLLGHVAQVLM). Intrachain disulfides connect Cys-38/Cys-80 and Cys-42/Cys-49. 78–79 (DD) contacts substrate. Asn-124 carries an N-linked (GlcNAc...) asparagine glycan. Cys-127 and Cys-158 are disulfide-bonded. Lys-154 contributes to the substrate binding site. Residue Asp-156 is the Nucleophile of the active site. N-linked (GlcNAc...) asparagine glycosylation occurs at Asn-177. An intrachain disulfide couples Cys-187 to Cys-209. Ser-188 provides a ligand contact to substrate. The N-linked (GlcNAc...) asparagine glycan is linked to Asn-201. Substrate-binding residues include Arg-213 and Asp-217. The active-site Proton donor is the Asp-217. Residues Ser-322 and Ser-332 each carry the phosphoserine modification. 2 N-linked (GlcNAc...) asparagine glycosylation sites follow: Asn-359 and Asn-385.

This sequence belongs to the glycosyl hydrolase 27 family. As to quaternary structure, homodimer.

It is found in the lysosome. It catalyses the reaction Cleavage of non-reducing alpha-(1-&gt;3)-N-acetylgalactosamine residues from human blood group A and AB mucin glycoproteins, Forssman hapten and blood group A lacto series glycolipids.. The catalysed reaction is a neolactoside IV(3)-alpha-GalNAc,IV(2)-alpha-Fuc-nLc4Cer(d18:1(4E)) + H2O = a neolactoside IV(2)-alpha-Fuc-nLc4Cer(d18:1(4E)) + N-acetyl-alpha-D-galactosamine. The enzyme catalyses a neolactoside IV(3)-alpha-GalNAc,IV(2)-alpha-Fuc-nLc4Cer(d18:0) + H2O = a neolactoside IV(2)-alpha-Fuc-nLc4Cer(d18:0) + N-acetyl-alpha-D-galactosamine. It carries out the reaction a globoside IV3GalNAc-Gb4Cer + H2O = N-acetyl-alpha-D-galactosamine + a globoside Gb4Cer. Functionally, removes terminal alpha-N-acetylgalactosamine residues from glycolipids and glycopeptides. Required for the breakdown of glycolipids. The protein is Alpha-N-acetylgalactosaminidase of Homo sapiens (Human).